The sequence spans 213 residues: Orotate phosphoribosyltransferase (213 aa).

Lys-26 contacts 5-phospho-alpha-D-ribose 1-diphosphate. 34–35 contacts orotate; the sequence is FF. Residues 72-73, Arg-99, Lys-100, Lys-103, His-105, and 124-132 each bind 5-phospho-alpha-D-ribose 1-diphosphate; these read YK and DDVITAGTA. Orotate is bound by residues Thr-128 and Arg-156.

This sequence belongs to the purine/pyrimidine phosphoribosyltransferase family. PyrE subfamily. Homodimer. It depends on Mg(2+) as a cofactor.

It carries out the reaction orotidine 5'-phosphate + diphosphate = orotate + 5-phospho-alpha-D-ribose 1-diphosphate. It participates in pyrimidine metabolism; UMP biosynthesis via de novo pathway; UMP from orotate: step 1/2. In terms of biological role, catalyzes the transfer of a ribosyl phosphate group from 5-phosphoribose 1-diphosphate to orotate, leading to the formation of orotidine monophosphate (OMP). This is Orotate phosphoribosyltransferase from Shigella sonnei (strain Ss046).